Consider the following 474-residue polypeptide: 3-isopropylmalate dehydratase large subunit (474 aa).

Residues Cys353, Cys414, and Cys417 each coordinate [4Fe-4S] cluster.

Belongs to the aconitase/IPM isomerase family. LeuC type 1 subfamily. Heterodimer of LeuC and LeuD. [4Fe-4S] cluster serves as cofactor.

The enzyme catalyses (2R,3S)-3-isopropylmalate = (2S)-2-isopropylmalate. The protein operates within amino-acid biosynthesis; L-leucine biosynthesis; L-leucine from 3-methyl-2-oxobutanoate: step 2/4. Its function is as follows. Catalyzes the isomerization between 2-isopropylmalate and 3-isopropylmalate, via the formation of 2-isopropylmaleate. This Teredinibacter turnerae (strain ATCC 39867 / T7901) protein is 3-isopropylmalate dehydratase large subunit.